A 342-amino-acid polypeptide reads, in one-letter code: Phosphoribosylformylglycinamidine cyclo-ligase (342 aa).

The protein belongs to the AIR synthase family.

It is found in the cytoplasm. It carries out the reaction 2-formamido-N(1)-(5-O-phospho-beta-D-ribosyl)acetamidine + ATP = 5-amino-1-(5-phospho-beta-D-ribosyl)imidazole + ADP + phosphate + H(+). The protein operates within purine metabolism; IMP biosynthesis via de novo pathway; 5-amino-1-(5-phospho-D-ribosyl)imidazole from N(2)-formyl-N(1)-(5-phospho-D-ribosyl)glycinamide: step 2/2. The polypeptide is Phosphoribosylformylglycinamidine cyclo-ligase (Staphylococcus aureus (strain USA300)).